Consider the following 222-residue polypeptide: Cell division protein FtsQ (222 aa).

Over 1-5 (MNKKV) the chain is Cytoplasmic. Residues 6 to 26 (IAIVVGVVVVLVAILGVVAWF) form a helical membrane-spanning segment. Topologically, residues 27–222 (VPILKVGNIE…ISSPSMVTVR (196 aa)) are extracellular. The POTRA domain occupies 30–98 (LKVGNIEVTG…STITVELTER (69 aa)).

This sequence belongs to the FtsQ/DivIB family. FtsQ subfamily.

Its subcellular location is the cell membrane. Its function is as follows. Essential cell division protein. In Corynebacterium glutamicum (strain ATCC 13032 / DSM 20300 / JCM 1318 / BCRC 11384 / CCUG 27702 / LMG 3730 / NBRC 12168 / NCIMB 10025 / NRRL B-2784 / 534), this protein is Cell division protein FtsQ.